The sequence spans 323 residues: Methionyl-tRNA formyltransferase (323 aa).

117–120 (SLLP) serves as a coordination point for (6S)-5,6,7,8-tetrahydrofolate.

This sequence belongs to the Fmt family.

It carries out the reaction L-methionyl-tRNA(fMet) + (6R)-10-formyltetrahydrofolate = N-formyl-L-methionyl-tRNA(fMet) + (6S)-5,6,7,8-tetrahydrofolate + H(+). Its function is as follows. Attaches a formyl group to the free amino group of methionyl-tRNA(fMet). The formyl group appears to play a dual role in the initiator identity of N-formylmethionyl-tRNA by promoting its recognition by IF2 and preventing the misappropriation of this tRNA by the elongation apparatus. The polypeptide is Methionyl-tRNA formyltransferase (Albidiferax ferrireducens (strain ATCC BAA-621 / DSM 15236 / T118) (Rhodoferax ferrireducens)).